We begin with the raw amino-acid sequence, 389 residues long: Flavin-dependent monooxygenase (389 aa).

Residues 12-15, 34-35, Gln44, Arg105, Tyr267, and Asp289 each bind FAD; these read AGVA and EK.

It belongs to the aromatic-ring hydroxylase family. FAD serves as cofactor.

It catalyses the reaction a tetracycline + NADPH + O2 + H(+) = a (1S,10aS)-3-(CONH2)-1-(Me2N)-3,3a,4,6-(HO)4-2,5-dioxo-1H,10aH,11H,11aH-cyclopenta[b]anthracene + CO + NADP(+) + H2O. It carries out the reaction 7-chlorotetracycline + NADPH + O2 + H(+) = (1S,10S,10aS)-3-(CONH2)-9-Cl-1-(Me2N)-3,3a,4,10-(HO)4-10-Me-2,5-dioxo-1H,10aH,11H,11aH-cyclopenta[b]anthracen-6-olate + CO + NADP(+) + H2O. Inhibited by anhydrotetracycline. In terms of biological role, an FAD-requiring monooxygenase active on tetracycline antibiotic and some of its derivatives, which leads to their inactivation. Expression in E.coli confers high resistance to tetracycline and oxytetracycline, does not confer resistance to minocycline or tigecycline. The reaction requires NADPH. Expression in L.pneumophila confers resistance to tetracycline. Degrades and confers resistance to tetracycline and chlortetracycline. The polypeptide is Flavin-dependent monooxygenase (tet(56)) (Legionella longbeachae serogroup 1 (strain NSW150)).